The following is a 332-amino-acid chain: uncharacterized protein (332 aa).

The signal sequence occupies residues 1 to 32; the sequence is MSRDRGARGLRKYGRFALATGAATALSLTASG. The N-palmitoyl cysteine moiety is linked to residue C33. A lipid anchor (S-diacylglycerol cysteine) is attached at C33.

Its subcellular location is the cell membrane. This is an uncharacterized protein from Streptomyces avermitilis (strain ATCC 31267 / DSM 46492 / JCM 5070 / NBRC 14893 / NCIMB 12804 / NRRL 8165 / MA-4680).